Consider the following 573-residue polypeptide: Heat shock protein 60A (573 aa).

A mitochondrion-targeting transit peptide spans 1-57 (MFRLPVSLARSSISRQLAMRGYAKDVRFGPEVRAMMLQGVDVLADAVAVTMGPKGRN).

It belongs to the chaperonin (HSP60) family.

It localises to the mitochondrion matrix. Functionally, prevents misfolding and promotes the refolding and proper assembly of unfolded polypeptides generated under stress conditions. This is Heat shock protein 60A from Drosophila melanogaster (Fruit fly).